The primary structure comprises 224 residues: Ribose-5-phosphate isomerase A (224 aa).

Substrate-binding positions include Thr26 to Thr29, Asp81 to Asp84, and Lys94 to Gly97. Glu103 functions as the Proton acceptor in the catalytic mechanism. A substrate-binding site is contributed by Lys121.

The protein belongs to the ribose 5-phosphate isomerase family. Homodimer.

The catalysed reaction is aldehydo-D-ribose 5-phosphate = D-ribulose 5-phosphate. The protein operates within carbohydrate degradation; pentose phosphate pathway; D-ribose 5-phosphate from D-ribulose 5-phosphate (non-oxidative stage): step 1/1. Its function is as follows. Catalyzes the reversible conversion of ribose-5-phosphate to ribulose 5-phosphate. The chain is Ribose-5-phosphate isomerase A from Listeria monocytogenes serovar 1/2a (strain ATCC BAA-679 / EGD-e).